A 202-amino-acid chain; its full sequence is Nascent polypeptide-associated complex subunit alpha (202 aa).

Over residues 1 to 19 (MADPRVEELPDEEVPKTNV) the composition is skewed to basic and acidic residues. The segment at 1 to 44 (MADPRVEELPDEEVPKTNVEDAGSDSESEAGEEPTIPGGAAVAV) is disordered. A compositionally biased stretch (acidic residues) spans 22-32 (AGSDSESEAGE). An NAC-A/B domain is found at 46–111 (SRNEKKARKA…AKIEDLNAQA (66 aa)). A disordered region spans residues 118-165 (QLAAQEAAQEHAGHEHEDILGKAKEPEAEKKEAEEDDGEEVDESGLEA). Basic and acidic residues predominate over residues 125-150 (AQEHAGHEHEDILGKAKEPEAEKKEA). A compositionally biased stretch (acidic residues) spans 151-162 (EEDDGEEVDESG). Residues 163–202 (LEAKDIELVMAQANVSRKKAVKALRENDNDIVNSIMALSI) form the UBA domain.

It belongs to the NAC-alpha family. In terms of assembly, part of the nascent polypeptide-associated complex (NAC), consisting of egd2 and egd1. NAC associates with ribosomes via egd1.

The protein resides in the cytoplasm. The protein localises to the nucleus. In terms of biological role, component of the nascent polypeptide-associated complex (NAC), a dynamic component of the ribosomal exit tunnel, protecting the emerging polypeptides from interaction with other cytoplasmic proteins to ensure appropriate nascent protein targeting. The NAC complex also promotes mitochondrial protein import by enhancing productive ribosome interactions with the outer mitochondrial membrane and blocks the inappropriate interaction of ribosomes translating non-secretory nascent polypeptides with translocation sites in the membrane of the endoplasmic reticulum. Egd2 may also be involved in transcription regulation. The polypeptide is Nascent polypeptide-associated complex subunit alpha (egd2) (Aspergillus terreus (strain NIH 2624 / FGSC A1156)).